We begin with the raw amino-acid sequence, 48 residues long: MRKAIVCFTIDANEKSLLSQLAERENKSLSQYVREIVLDRMIEELNEN.

This is an uncharacterized protein from Acidianus filamentous virus 2 (isolate Italy/Pozzuoli) (AFV-2).